The sequence spans 520 residues: Type I restriction enzyme EcoR124I/EcoR124II methylase subunit (520 aa).

The segment at alanine 10–alanine 190 is N-terminal domain. S-adenosyl-L-methionine is bound by residues glutamate 198–glutamine 203, serine 230–serine 232, and glutamate 254. Residues glutamate 198 to tyrosine 473 form a catalytic domain region. Positions glutamate 481 to valine 510 are C-terminal tail.

Belongs to the N(4)/N(6)-methyltransferase family. As to quaternary structure, the type I restriction/modification system is composed of three polypeptides R, M and S; the restriction enzyme has stoichiometry R(2)M(2)S(1) while the methyltransferase is M(2)S(1). There is an equilibrium between R(2)M(2)S(1) and R(1)M(2)S(1); the latter is methylation and translocation proficient but restriction deficient. (Microbial infection) Holoenenzyme interacts with Escherichia phage T7 protein Ocr; this interaction leads to the inhibition of the restriction activity, but may still allow methylation and translocation.

The enzyme catalyses a 2'-deoxyadenosine in DNA + S-adenosyl-L-methionine = an N(6)-methyl-2'-deoxyadenosine in DNA + S-adenosyl-L-homocysteine + H(+). Its function is as follows. The subtype gamma methyltransferase (M) subunit of a type I restriction enzyme. The M and S subunits together form a methyltransferase (MTase) that methylates A-3 on the top and bottom strand of the sequence 5'-GAAN(6)RTCG-3' (for EcoR124I) and 5'-GAAN(7)RTCG-3' (for EcoR124II). In the presence of the R subunit the complex can also act as an endonuclease, binding to the same target sequence but cutting the DNA some distance from this site. Whether the DNA is cut or modified depends on the methylation state of the target sequence. When the target site is unmodified, the DNA is cut. When the target site is hemimethylated, the complex acts as a maintenance MTase modifying the DNA so that both strands become methylated. After locating a non-methylated recognition site, the enzyme complex serves as a molecular motor that translocates DNA in an ATP-dependent manner until a collision occurs that triggers cleavage. The R(1)M(2)S(1) complex translocates an average of 555 bp/second on nicked DNA; the R(2)M(2)S(1) complex translocates at double that speed. The 2 R subunit motors are independent and track along the helical pitch of the DNA, inducing positive supercoiling ahead of themselves. This is Type I restriction enzyme EcoR124I/EcoR124II methylase subunit (hsdM) from Escherichia coli.